Consider the following 359-residue polypeptide: DNA-directed RNA polymerase subunit alpha (359 aa).

The segment at 1 to 226 (MLISQRPSLA…ELFGLARELN (226 aa)) is alpha N-terminal domain (alpha-NTD). The interval 241–359 (ADTIAAYAMP…GQDYAETEQL (119 aa)) is alpha C-terminal domain (alpha-CTD). A disordered region spans residues 315-359 (FDPSAAAAEYPSEGWASETETVGGLGRVEDNGYDDGQDYAETEQL). A compositionally biased stretch (acidic residues) spans 345–359 (NGYDDGQDYAETEQL).

The protein belongs to the RNA polymerase alpha chain family. Homodimer. The RNAP catalytic core consists of 2 alpha, 1 beta, 1 beta' and 1 omega subunit. When a sigma factor is associated with the core the holoenzyme is formed, which can initiate transcription.

The enzyme catalyses RNA(n) + a ribonucleoside 5'-triphosphate = RNA(n+1) + diphosphate. Functionally, DNA-dependent RNA polymerase catalyzes the transcription of DNA into RNA using the four ribonucleoside triphosphates as substrates. This Saccharopolyspora erythraea (strain ATCC 11635 / DSM 40517 / JCM 4748 / NBRC 13426 / NCIMB 8594 / NRRL 2338) protein is DNA-directed RNA polymerase subunit alpha.